The chain runs to 616 residues: Dihydroxy-acid dehydratase (616 aa).

D81 lines the Mg(2+) pocket. C122 contributes to the [2Fe-2S] cluster binding site. 2 residues coordinate Mg(2+): D123 and K124. The residue at position 124 (K124) is an N6-carboxylysine. Residue C195 participates in [2Fe-2S] cluster binding. E491 serves as a coordination point for Mg(2+). Catalysis depends on S517, which acts as the Proton acceptor.

It belongs to the IlvD/Edd family. As to quaternary structure, homodimer. [2Fe-2S] cluster serves as cofactor. The cofactor is Mg(2+).

The enzyme catalyses (2R)-2,3-dihydroxy-3-methylbutanoate = 3-methyl-2-oxobutanoate + H2O. It catalyses the reaction (2R,3R)-2,3-dihydroxy-3-methylpentanoate = (S)-3-methyl-2-oxopentanoate + H2O. Its pathway is amino-acid biosynthesis; L-isoleucine biosynthesis; L-isoleucine from 2-oxobutanoate: step 3/4. It functions in the pathway amino-acid biosynthesis; L-valine biosynthesis; L-valine from pyruvate: step 3/4. In terms of biological role, functions in the biosynthesis of branched-chain amino acids. Catalyzes the dehydration of (2R,3R)-2,3-dihydroxy-3-methylpentanoate (2,3-dihydroxy-3-methylvalerate) into 2-oxo-3-methylpentanoate (2-oxo-3-methylvalerate) and of (2R)-2,3-dihydroxy-3-methylbutanoate (2,3-dihydroxyisovalerate) into 2-oxo-3-methylbutanoate (2-oxoisovalerate), the penultimate precursor to L-isoleucine and L-valine, respectively. The protein is Dihydroxy-acid dehydratase of Yersinia enterocolitica serotype O:8 / biotype 1B (strain NCTC 13174 / 8081).